Reading from the N-terminus, the 362-residue chain is MLFPSIVAALAALANPVLSLTIPQATGSELDVQLSAIGNTRIKAVITNKADRQLKLLKYNNFFDDGPIQKAGVFKDGQPVKFEGMLRRVLMKNLEPSLFVSLSPGQTVEREFDIASTADLASGGAYSVFSQGAIPFAEGDGTTIAGAVAFKSNKLDLDIDGALAATVSKAINPISARTRVESACRGEQRETLLKALEYSAQLSRAAAQAAQNNTRKVEEYFMKSDAQTVETIVARLNAVAQESSSTDSGATRYFCNDRGNQCTPNTIAYTLPSLNVVVNCPIYYDLPVISDECHAQDQATTCLHEFTHNPGVYDPYCRDHAYGYDGIRKLSPEQALLNADTYSLFANGKPKSQTTSNFNLKF.

The N-terminal stretch at 1-19 is a signal peptide; sequence MLFPSIVAALAALANPVLS. A propeptide spanning residues 20–177 is cleaved from the precursor; it reads LTIPQATGSE…SKAINPISAR (158 aa). 2 cysteine pairs are disulfide-bonded: Cys184–Cys255 and Cys262–Cys280. Residue His304 participates in Zn(2+) binding. Residue Glu305 is part of the active site. Zn(2+) contacts are provided by His308 and Asp319.

It belongs to the peptidase M35 family. It depends on Zn(2+) as a cofactor.

The protein resides in the secreted. The catalysed reaction is Preferential cleavage of bonds with hydrophobic residues in P1'. Also 3-Asn-|-Gln-4 and 8-Gly-|-Ser-9 bonds in insulin B chain.. Secreted metalloproteinase that allows assimilation of proteinaceous substrates. Shows high activities on basic nuclear substrates such as histone and protamine. May be involved in virulence. The sequence is that of Neutral protease 2 homolog MEP2 (MEP2) from Coccidioides posadasii (strain C735) (Valley fever fungus).